Reading from the N-terminus, the 226-residue chain is Apoptosis regulator OPG045 (226 aa).

Residues 32–37 form an essential and sufficient to inhibit host NLRP1 region; the sequence is NVDHDY.

This sequence belongs to the orthopoxvirus OPG045 family. As to quaternary structure, homodimer. Interacts with host pro-apoptotic protein BCL2L11 (via BH3 domain). Interacts with host NLRP1. Interacts with host BAK.

The protein localises to the host mitochondrion outer membrane. The protein resides in the host cytoplasm. In terms of biological role, plays a role in evading host innate immune response by inhibiting host inflammasome activation. Interacts with and inhibits NLR-mediated interleukin-1 beta/IL1B production in infected cells. At the host mitochondria outer membrane, interacts with the BH3 domain of host BAK and prevents BAK from binding active BAX. In turn, host apoptosis is inhibited. This chain is Apoptosis regulator OPG045 (OPG045), found in Vaccinia virus (strain Western Reserve) (VACV).